The sequence spans 118 residues: Basic phospholipase A2 nigexine (118 aa).

7 cysteine pairs are disulfide-bonded: cysteine 11-cysteine 70, cysteine 26-cysteine 117, cysteine 28-cysteine 44, cysteine 43-cysteine 98, cysteine 50-cysteine 91, cysteine 59-cysteine 84, and cysteine 77-cysteine 89. Ca(2+) contacts are provided by tyrosine 27, glycine 29, and glycine 31. Residue histidine 47 is part of the active site. Residue aspartate 48 coordinates Ca(2+). The short motif at 52 to 69 (EKAGKMGCWPYFTLYKYK) is the Coagulation factor Xa binding motif element. The active site involves aspartate 92.

Belongs to the phospholipase A2 family. Group I subfamily. D49 sub-subfamily. The cofactor is Ca(2+). Expressed by the venom gland.

Its subcellular location is the secreted. It carries out the reaction a 1,2-diacyl-sn-glycero-3-phosphocholine + H2O = a 1-acyl-sn-glycero-3-phosphocholine + a fatty acid + H(+). Functionally, snake venom phospholipase A2 (PLA2) that shows anticoagulant activity, has cytotoxic activity and affects neuromuscular transmission in vitro. PLA2 catalyzes the calcium-dependent hydrolysis of the 2-acyl groups in 3-sn-phosphoglycerides. This Naja pallida (Red spitting cobra) protein is Basic phospholipase A2 nigexine.